The following is a 347-amino-acid chain: Biotin synthase (347 aa).

Residues 54–273 (NHVETASLLS…IAVARIMMPK (220 aa)) enclose the Radical SAM core domain. Cys-69, Cys-73, and Cys-76 together coordinate [4Fe-4S] cluster. Residues Cys-113, Cys-144, Cys-204, and Arg-277 each coordinate [2Fe-2S] cluster.

It belongs to the radical SAM superfamily. Biotin synthase family. Homodimer. The cofactor is [4Fe-4S] cluster. [2Fe-2S] cluster serves as cofactor.

The catalysed reaction is (4R,5S)-dethiobiotin + (sulfur carrier)-SH + 2 reduced [2Fe-2S]-[ferredoxin] + 2 S-adenosyl-L-methionine = (sulfur carrier)-H + biotin + 2 5'-deoxyadenosine + 2 L-methionine + 2 oxidized [2Fe-2S]-[ferredoxin]. It functions in the pathway cofactor biosynthesis; biotin biosynthesis; biotin from 7,8-diaminononanoate: step 2/2. In terms of biological role, catalyzes the conversion of dethiobiotin (DTB) to biotin by the insertion of a sulfur atom into dethiobiotin via a radical-based mechanism. The sequence is that of Biotin synthase from Afipia carboxidovorans (strain ATCC 49405 / DSM 1227 / KCTC 32145 / OM5) (Oligotropha carboxidovorans).